The primary structure comprises 288 residues: Mortality factor 4-like protein 2 (288 aa).

The span at 1–15 (MSSRKQGSQPRGQQS) shows a compositional bias: polar residues. Residues 1 to 113 (MSSRKQGSQP…RADPTVESEE (113 aa)) form a disordered region. Ser71 is subject to Phosphoserine. Residues 117-288 (NRMEVKVKIP…ASAEYHRKAL (172 aa)) enclose the MRG domain.

As to quaternary structure, component of the NuA4 histone acetyltransferase complex which contains the catalytic subunit KAT5/TIP60 and the subunits EP400, TRRAP/PAF400, BRD8/SMAP, EPC1, DMAP1/DNMAP1, RUVBL1/TIP49, RUVBL2, ING3, actin, ACTL6A/BAF53A, MORF4L1/MRG15, MORF4L2/MRGX, MRGBP, YEATS4/GAS41 and VPS72/YL1. The NuA4 complex interacts with MYC and the adenovirus E1A protein. MORF4L1 may also participate in the formation of NuA4 related complexes which lack the KAT5/TIP60 catalytic subunit, but which include the SWI/SNF related protein SRCAP. Component of the MSIN3A histone deacetylase complex, which includes SIN3A, HDAC2, ARID4B, MORF4L1, RBBP4/RbAp48, and RBBP7/RbAp46. Interacts with MRFAP1 and RB1. May also interact with one or more as yet undefined members of the TLE (transducin-like enhancer of split) family of transcriptional repressors.

It localises to the nucleus. Its function is as follows. Component of the NuA4 histone acetyltransferase complex which is involved in transcriptional activation of select genes principally by acetylation of nucleosomal histone H4 and H2A. This modification may both alter nucleosome - DNA interactions and promote interaction of the modified histones with other proteins which positively regulate transcription. This complex may be required for the activation of transcriptional programs associated with oncogene and proto-oncogene mediated growth induction, tumor suppressor mediated growth arrest and replicative senescence, apoptosis, and DNA repair. The NuA4 complex ATPase and helicase activities seem to be, at least in part, contributed by the association of RUVBL1 and RUVBL2 with EP400. NuA4 may also play a direct role in DNA repair when directly recruited to sites of DNA damage. Also a component of the MSIN3A complex which acts to repress transcription by deacetylation of nucleosomal histones. The sequence is that of Mortality factor 4-like protein 2 (MORF4L2) from Macaca fascicularis (Crab-eating macaque).